Consider the following 247-residue polypeptide: Ubiquinone biosynthesis O-methyltransferase (247 aa).

S-adenosyl-L-methionine-binding residues include R45, G65, D86, and L130.

The protein belongs to the methyltransferase superfamily. UbiG/COQ3 family.

It carries out the reaction a 3-demethylubiquinol + S-adenosyl-L-methionine = a ubiquinol + S-adenosyl-L-homocysteine + H(+). The catalysed reaction is a 3-(all-trans-polyprenyl)benzene-1,2-diol + S-adenosyl-L-methionine = a 2-methoxy-6-(all-trans-polyprenyl)phenol + S-adenosyl-L-homocysteine + H(+). It functions in the pathway cofactor biosynthesis; ubiquinone biosynthesis. Its function is as follows. O-methyltransferase that catalyzes the 2 O-methylation steps in the ubiquinone biosynthetic pathway. This is Ubiquinone biosynthesis O-methyltransferase from Alkalilimnicola ehrlichii (strain ATCC BAA-1101 / DSM 17681 / MLHE-1).